Here is a 479-residue protein sequence, read N- to C-terminus: Ammonium transporter Rh type C (479 aa).

At 1–9 (MAWNTNLRW) the chain is on the cytoplasmic side. Residues 10 to 30 (RLPLTCLLLQVAMVILFGVFV) traverse the membrane as a helical segment. The Extracellular portion of the chain corresponds to 31 to 60 (RYDFDADAHWWTERKHKNLSEVENEFYYRY). N-linked (GlcNAc...) asparagine glycosylation is present at Asn48. The chain crosses the membrane as a helical span at residues 61–81 (PSFQDVHVMVFVGFGFLMTFL). Over 82–85 (QRYG) the chain is Cytoplasmic. Residues 86–106 (FSAVGFNFLLAAFGIQWALLM) form a helical membrane-spanning segment. The Extracellular segment spans residues 107–123 (QGWFHFLEGRYIVVGVE). Residues 124–144 (NLINADFCVASVCVAFGAVLG) form a helical membrane-spanning segment. Topologically, residues 145-148 (KVSP) are cytoplasmic. A helical transmembrane segment spans residues 149–169 (IQLLIMTFFQVTLFAVNEFIL). The Extracellular segment spans residues 170–177 (LNLLKVKD). The helical transmembrane segment at 178–200 (AGGSMTIHTFYAYFELTVTRILY) threads the bilayer. Residues 201 to 218 (RRNLEQSKERQSSAYQSD) lie on the Cytoplasmic side of the membrane. The helical transmembrane segment at 219–239 (LFAMIGTLFLWMYWPSFNSAI) threads the bilayer. Residues 240–250 (SYHGDSQHRAA) are Extracellular-facing. Residues 251-271 (INTYCSLAACVLTSVAVSSAL) traverse the membrane as a helical segment. The Cytoplasmic segment spans residues 272–281 (HKKGKLDMVH). Residues 282–302 (IQNATLAGGVAVGTTAEMMLM) form a helical membrane-spanning segment. Residue Pro303 is a topological domain, extracellular. A helical membrane pass occupies residues 304-324 (YGALIIGFICGIISTLGFVYL). Over 325-345 (TPFLESRLHIQDTCGINNLHG) the chain is Cytoplasmic. Residues 346-366 (IPGIIGGIVGAVTAASASLEV) traverse the membrane as a helical segment. Residues 367 to 394 (YGKEGLVHSFDFQDFKRDWTARTQGKFQ) are Extracellular-facing. Residues 395-415 (IYGLLVTLAMALMGGIIVGLI) traverse the membrane as a helical segment. At 416–479 (LRLPFWGQPS…PMASSVPLVP (64 aa)) the chain is on the cytoplasmic side.

This sequence belongs to the ammonium transporter (TC 2.A.49) family. Rh subfamily. As to quaternary structure, homotrimer. Post-translationally, N-glycosylated.

The protein localises to the apical cell membrane. It catalyses the reaction NH4(+)(in) = NH4(+)(out). It carries out the reaction methylamine(out) = methylamine(in). The enzyme catalyses CO2(out) = CO2(in). Its function is as follows. Ammonium transporter involved in the maintenance of acid-base homeostasis. Transports ammonium and its related derivative methylammonium across the plasma membrane of epithelial cells likely contributing to renal transepithelial ammonia transport and ammonia metabolism. Postulated to primarily mediate an electroneutral bidirectional transport of NH3 ammonia species according to a mechanism that implies interaction of an NH4(+) ion with acidic residues of the pore entry followed by dissociation of NH4(+) into NH3 and H(+). As a result NH3 transits through the central pore and is protonated on the extracellular side reforming NH4(+). May act as a CO2 channel providing for renal acid secretion. In Macaca mulatta (Rhesus macaque), this protein is Ammonium transporter Rh type C (RHCG).